The primary structure comprises 6668 residues: Centrosome-associated protein CEP250 (6668 aa).

Coiled coils occupy residues 562–589, 632–666, 873–988, 1042–1087, 1252–1307, 1333–1427, 1501–1538, 1594–1688, 1896–1930, 1975–2224, 2298–3272, 3298–3436, 3526–3599, 3697–3773, 3856–4137, 4170–4486, 4515–5078, 5165–5202, 5298–5731, and 5927–6119; these read KAFH…LQQD, TREL…LRAS, HTEC…LRSS, LRMS…HEAA, VEDL…AVSR, LESL…LEKK, RPAA…LGTQ, REAL…SEVA, HDIL…TTEK, EETL…AKQS, AEDE…LKME, QQEL…SRAE, LVQL…AKEE, CASL…EERR, TEML…VEAE, RRKL…LRER, LETL…FRRR, LASL…QETL, LREK…QHRV, and TQAL…LWRQ.

Proteolytically cleaved; only the full-length form localizes to the inner core, while processed version also localizes to the outer core during the onset of cell division.

It localises to the cytoplasm. Its subcellular location is the cytoskeleton. The protein localises to the microtubule organizing center. The protein resides in the centrosome. Its function is as follows. Part of the centrosome inner core complex. Required for the linking of centrosomal inner and outer cores. The chain is Centrosome-associated protein CEP250 from Toxoplasma gondii (strain ATCC 50611 / Me49).